The chain runs to 122 residues: Large ribosomal subunit protein uL14 (122 aa).

It belongs to the universal ribosomal protein uL14 family. In terms of assembly, part of the 50S ribosomal subunit. Forms a cluster with proteins L3 and L19. In the 70S ribosome, L14 and L19 interact and together make contacts with the 16S rRNA in bridges B5 and B8.

Functionally, binds to 23S rRNA. Forms part of two intersubunit bridges in the 70S ribosome. This chain is Large ribosomal subunit protein uL14, found in Nitratidesulfovibrio vulgaris (strain ATCC 29579 / DSM 644 / CCUG 34227 / NCIMB 8303 / VKM B-1760 / Hildenborough) (Desulfovibrio vulgaris).